The chain runs to 315 residues: Ribosomal RNA small subunit methyltransferase H (315 aa).

S-adenosyl-L-methionine is bound by residues 37–39 (GGH), aspartate 57, phenylalanine 83, aspartate 105, and glutamine 112.

This sequence belongs to the methyltransferase superfamily. RsmH family.

Its subcellular location is the cytoplasm. It catalyses the reaction cytidine(1402) in 16S rRNA + S-adenosyl-L-methionine = N(4)-methylcytidine(1402) in 16S rRNA + S-adenosyl-L-homocysteine + H(+). Functionally, specifically methylates the N4 position of cytidine in position 1402 (C1402) of 16S rRNA. The sequence is that of Ribosomal RNA small subunit methyltransferase H from Pseudomonas putida (strain W619).